We begin with the raw amino-acid sequence, 902 residues long: Mitochondrial aspartate-glutamate transporter AGC1 (902 aa).

Solcar repeat units follow at residues 528–614 (FDSL…MRNR), 622–710 (LSLF…LKKD), and 725–813 (LKTW…FKGF). 6 helical membrane-spanning segments follow: residues 534-554 (FSLG…IDFI), 591-611 (GPQL…NDFM), 622-642 (LSLF…VIFT), 681-702 (GLYN…IYFP), 731-751 (LTAG…FDVI), and 786-806 (FKGG…TLAA).

The protein belongs to the mitochondrial carrier (TC 2.A.29) family.

Its subcellular location is the mitochondrion inner membrane. Calcium-dependent mitochondrial aspartate and glutamate carrier. Transport of glutamate in mitochondria is required for mitochondrial transamination reactions and ornithine synthesis. Plays also a role in malate-aspartate NADH shuttle, which is critical for growth on acetate and fatty acids. This Saccharomyces cerevisiae (strain ATCC 204508 / S288c) (Baker's yeast) protein is Mitochondrial aspartate-glutamate transporter AGC1 (AGC1).